The primary structure comprises 399 residues: uncharacterized protein (399 aa).

10 helical membrane-spanning segments follow: residues 6 to 26 (HLTF…LIIP), 27 to 47 (KGYN…FIPL), 60 to 80 (LIFS…INKD), 111 to 131 (ILYA…FQKF), 147 to 167 (MGNI…HFFI), 173 to 193 (STLF…LSGA), 195 to 215 (GGWI…KEFI), 220 to 240 (IITL…SPKF), 328 to 348 (GLVG…YFIK), and 362 to 382 (ILGI…SFLA).

It is found in the cell membrane. This is an uncharacterized protein from Haemophilus influenzae (strain ATCC 51907 / DSM 11121 / KW20 / Rd).